The sequence spans 205 residues: Imidazoleglycerol-phosphate dehydratase (205 aa).

Belongs to the imidazoleglycerol-phosphate dehydratase family.

Its subcellular location is the cytoplasm. It carries out the reaction D-erythro-1-(imidazol-4-yl)glycerol 3-phosphate = 3-(imidazol-4-yl)-2-oxopropyl phosphate + H2O. The protein operates within amino-acid biosynthesis; L-histidine biosynthesis; L-histidine from 5-phospho-alpha-D-ribose 1-diphosphate: step 6/9. This chain is Imidazoleglycerol-phosphate dehydratase, found in Chloroflexus aurantiacus (strain ATCC 29366 / DSM 635 / J-10-fl).